A 268-amino-acid chain; its full sequence is Lipopolysaccharide core heptose(I) kinase WaaP (268 aa).

Phosphotyrosine; by autocatalysis occurs at positions 30, 48, and 98. Residue Asp-163 is part of the active site. 5 positions are modified to phosphotyrosine; by autocatalysis: Tyr-165, Tyr-211, Tyr-231, Tyr-258, and Tyr-264.

This sequence belongs to the protein kinase superfamily. KdkA/RfaP family. In terms of assembly, interacts with acyl-AcpP. The WaaP hydrophobic channel can accommodate acyl chains of different lengths, but myristyl-ACP is likely its physiological binding partner. Mg(2+) serves as cofactor.

It localises to the cytoplasm. It carries out the reaction an L-alpha-D-Hep-(1-&gt;3)-L-alpha-D-Hep-(1-&gt;5)-[alpha-Kdo-(2-&gt;4)]-alpha-Kdo-(2-&gt;6)-lipid A + ATP = an L-alpha-D-Hep-(1-&gt;3)-4-O-phospho-L-alpha-D-Hep-(1-&gt;5)-[alpha-Kdo-(2-&gt;4)]-alpha-Kdo-(2-&gt;6)-lipid A + ADP + H(+). It catalyses the reaction L-tyrosyl-[protein] + ATP = O-phospho-L-tyrosyl-[protein] + ADP + H(+). It participates in bacterial outer membrane biogenesis; LPS core biosynthesis. With respect to regulation, acylated-acyl carrier protein (acyl-ACP) acts as a very tightly bound cofactor necessary for the production and stability of active WaaP kinase. In terms of biological role, kinase involved in the biosynthesis of the core oligosaccharide region of lipopolysaccharide (LPS). Catalyzes the phosphorylation of heptose I (HepI), the first heptose added to the Kdo2-lipid A module. Also has protein-tyrosine kinase activity: autophosphorylates on all Tyr residues; in vitro can phosphorylate poly(Glu,Tyr). The chain is Lipopolysaccharide core heptose(I) kinase WaaP from Pseudomonas aeruginosa (strain ATCC 15692 / DSM 22644 / CIP 104116 / JCM 14847 / LMG 12228 / 1C / PRS 101 / PAO1).